A 205-amino-acid polypeptide reads, in one-letter code: Glycerol-3-phosphate acyltransferase (205 aa).

The next 4 helical transmembrane spans lie at 4-24, 80-100, 112-132, and 138-158; these read IAPG…AILV, PFWL…PIFF, FGAI…TWLL, and GYSS…VWWF.

This sequence belongs to the PlsY family. Probably interacts with PlsX.

The protein resides in the cell inner membrane. The enzyme catalyses an acyl phosphate + sn-glycerol 3-phosphate = a 1-acyl-sn-glycero-3-phosphate + phosphate. It functions in the pathway lipid metabolism; phospholipid metabolism. Its function is as follows. Catalyzes the transfer of an acyl group from acyl-phosphate (acyl-PO(4)) to glycerol-3-phosphate (G3P) to form lysophosphatidic acid (LPA). This enzyme utilizes acyl-phosphate as fatty acyl donor, but not acyl-CoA or acyl-ACP. The polypeptide is Glycerol-3-phosphate acyltransferase (Cronobacter sakazakii (strain ATCC BAA-894) (Enterobacter sakazakii)).